Consider the following 293-residue polypeptide: Acidic endochitinase (293 aa).

The N-terminal stretch at Met1–Asn22 is a signal peptide. The region spanning Ala24–Val293 is the GH18 domain. 2 disulfide bridges follow: Cys43–Cys90 and Cys73–Cys80. The active-site Proton donor is the Glu150. Cys179 and Cys208 are disulfide-bonded.

It belongs to the glycosyl hydrolase 18 family. Chitinase class II subfamily.

It is found in the secreted. It localises to the extracellular space. It catalyses the reaction Random endo-hydrolysis of N-acetyl-beta-D-glucosaminide (1-&gt;4)-beta-linkages in chitin and chitodextrins.. In terms of biological role, this protein functions as a defense against chitin containing fungal pathogens. This Cicer arietinum (Chickpea) protein is Acidic endochitinase.